The following is a 716-amino-acid chain: Penicillin-binding protein 2A (716 aa).

A helical membrane pass occupies residues 22 to 42; sequence LNILFLAAFVIFTWIIVELGI. Catalysis depends on Ser397, which acts as the Acyl-ester intermediate. Basic and acidic residues predominate over residues 689 to 706; sequence SKQDKEGTQQKNKDKIEE. The disordered stretch occupies residues 689–716; it reads SKQDKEGTQQKNKDKIEENAENTTSSDN.

The protein belongs to the transpeptidase family.

It is found in the cell membrane. The protein resides in the forespore inner membrane. It catalyses the reaction Preferential cleavage: (Ac)2-L-Lys-D-Ala-|-D-Ala. Also transpeptidation of peptidyl-alanyl moieties that are N-acyl substituents of D-alanine.. It participates in cell wall biogenesis; peptidoglycan biosynthesis. Functionally, involved in the synthesis of peptidoglycan associated with cell wall elongation, especially following spore germination. Has a partially redundant function with PBP 1 (ponA) or PBP 4 (pbpD) during spore outgrowth. Plays a redundant role with PbpH in determining the rod shape of the cell during vegetative growth and spore outgrowth. The protein is Penicillin-binding protein 2A of Bacillus subtilis (strain 168).